Reading from the N-terminus, the 1090-residue chain is RNA-directed RNA polymerase (1090 aa).

The region spanning 506–678 (LSYGDVTRYL…ALASLTGCEI (173 aa)) is the RdRp catalytic domain.

The protein belongs to the reoviridae RNA-directed RNA polymerase family. As to quaternary structure, interacts with VP3 (Potential). Interacts with VP2; this interaction activates VP1. Interacts with NSP5; this interaction is probably necessary for the formation of functional virus factories. Interacts with NSP2; this interaction is weak. The cofactor is Mg(2+).

The protein resides in the virion. It carries out the reaction RNA(n) + a ribonucleoside 5'-triphosphate = RNA(n+1) + diphosphate. In terms of biological role, RNA-directed RNA polymerase that is involved in both transcription and genome replication. Together with VP3 capping enzyme, forms an enzyme complex positioned near the channels situated at each of the five-fold vertices of the core. Following infection, the outermost layer of the virus is lost, leaving a double-layered particle (DLP) made up of the core and VP6 shell. VP1 then catalyzes the transcription of fully conservative plus-strand genomic RNAs that are extruded through the DLP's channels into the cytoplasm where they function as mRNAs for translation of viral proteins. One copy of each of the viral (+)RNAs is also recruited during core assembly, together with newly synthesized polymerase complexes and VP2. The polymerase of these novo-formed particles catalyzes the synthesis of complementary minus-strands leading to dsDNA formation. To do so, the polymerase specifically recognizes conserved 3' sequence(s) in plus-strand RNA templates. Once dsRNA synthesis is complete, the polymerase switches to the transcriptional mode, thus providing secondary transcription. This Rotavirus C (isolate RVC/Human/United Kingdom/Bristol/1989) (RV-C) protein is RNA-directed RNA polymerase.